The sequence spans 283 residues: Lysozyme-like protein 7 (283 aa).

An N-terminal signal peptide occupies residues 1 to 18 (MAHKSIVIFSVLAVLCHS). Residues 53-273 (YAYALDIYVQ…AVEEDGKIYA (221 aa)) enclose the Ch-type lysozyme domain.

This sequence belongs to the glycosyl hydrolase 25 family. Expressed in intestine. Expressed in rectal gland cells and head neurons.

Plays a role in resistance to Gram-positive bacteria B.thuringiensis and M.nematophilum and Gram-negative bacteria S.boydii or S.flexneri infection and to fungus C.neoformans infection. Plays a role in susceptibility to Gram-negative bacterium S.typhimurium infection. The sequence is that of Lysozyme-like protein 7 from Caenorhabditis elegans.